We begin with the raw amino-acid sequence, 765 residues long: Palmitoyltransferase ZDHHC8 (765 aa).

The Cytoplasmic segment spans residues 1–13; that stretch reads MPRSPGTRLKPAK. Residues 14–34 form a helical membrane-spanning segment; sequence YIPVATAAALLVGSSTLFFVF. The Lumenal portion of the chain corresponds to 35–52; sequence TCPWLTRAVSPAVPVYNG. The chain crosses the membrane as a helical span at residues 53 to 73; sequence IIFLFVLANFSMATFMDPGVF. At 74-148 the chain is on the cytoplasmic side; that stretch reads PRADEDEDKE…NCIGRRNYRY (75 aa). The DHHC domain maps to 104-154; sequence KWCATCHFYRPPRCSHCSVCDNCVEDFDHHCPWVNNCIGRRNYRYFFLFLL. C134 functions as the S-palmitoyl cysteine intermediate in the catalytic mechanism. A helical transmembrane segment spans residues 149 to 169; it reads FFLFLLSLSAHMVGVVAFGLV. The Lumenal segment spans residues 170–190; sequence YVLNHAEGLGAAHTTITMAVM. A helical membrane pass occupies residues 191 to 211; it reads CVAGLFFIPVIGLTGFHVVLV. The Cytoplasmic portion of the chain corresponds to 212–765; that stretch reads TRGRTTNEQV…VGGTTYEISV (554 aa). Residues 293 to 352 are disordered; that stretch reads GLGRSKSKGSLDRLDEKPLDLGPPLPPKIEAGTFSSDLQTPRPGSAESALSVQRTSPPTP. Positions 301–311 are enriched in basic and acidic residues; that stretch reads GSLDRLDEKPL. S337 is subject to Phosphoserine. The residue at position 441 (R441) is an Omega-N-methylarginine. The tract at residues 509–540 is disordered; it reads LHPGATGDPPRPLPRSFSPVLGPRPREPSPVR. A phosphoserine mark is found at S606, S627, S675, S682, S725, and S743. The tract at residues 613–747 is disordered; the sequence is GPGFGGARNP…PGPSASPTRH (135 aa). Residues 622-653 show a composition bias toward low complexity; sequence PALQTSLSSLSSSVSRAPRTSSSSLQADQASS.

Belongs to the DHHC palmitoyltransferase family. ERF2/ZDHHC9 subfamily. In terms of tissue distribution, widely expressed.

The protein localises to the golgi apparatus membrane. It localises to the mitochondrion membrane. The catalysed reaction is L-cysteinyl-[protein] + hexadecanoyl-CoA = S-hexadecanoyl-L-cysteinyl-[protein] + CoA. Functionally, palmitoyltransferase that catalyzes the addition of palmitate onto various protein substrates and therefore functions in several unrelated biological processes. Through the palmitoylation of ABCA1 regulates the localization of the transporter to the plasma membrane and thereby regulates its function in cholesterol and phospholipid efflux. Could also pamitoylate the D(2) dopamine receptor DRD2 and regulate its stability and localization to the plasma membrane. Could also play a role in glutamatergic transmission. Its function is as follows. (Microbial infection) Able to palmitoylate SARS coronavirus-2/SARS-CoV-2 spike protein following its synthesis in the endoplasmic reticulum (ER). In the infected cell, promotes spike biogenesis by protecting it from premature ER degradation, increases half-life and controls the lipid organization of its immediate membrane environment. Once the virus has formed, spike palmitoylation controls fusion with the target cell. The sequence is that of Palmitoyltransferase ZDHHC8 from Homo sapiens (Human).